Consider the following 167-residue polypeptide: Shikimate kinase (167 aa).

12–17 (GSGKTT) provides a ligand contact to ATP. Residue T16 coordinates Mg(2+). Residues D34, R58, and G80 each contribute to the substrate site. Residue R117 participates in ATP binding. R135 is a binding site for substrate. R152 is an ATP binding site.

It belongs to the shikimate kinase family. Monomer. Mg(2+) serves as cofactor.

It localises to the cytoplasm. The enzyme catalyses shikimate + ATP = 3-phosphoshikimate + ADP + H(+). It functions in the pathway metabolic intermediate biosynthesis; chorismate biosynthesis; chorismate from D-erythrose 4-phosphate and phosphoenolpyruvate: step 5/7. Its function is as follows. Catalyzes the specific phosphorylation of the 3-hydroxyl group of shikimic acid using ATP as a cosubstrate. The polypeptide is Shikimate kinase (Salinispora tropica (strain ATCC BAA-916 / DSM 44818 / JCM 13857 / NBRC 105044 / CNB-440)).